A 688-amino-acid chain; its full sequence is Polyribonucleotide nucleotidyltransferase (688 aa).

Mg(2+) contacts are provided by Asp484 and Asp490. In terms of domain architecture, KH spans 550 to 609; sequence PTTEIFNVAPDKIIEIIGQGGRVIREIVEKFEVKIDLNKPSGEVKIMGNKERVLKTKEFI. Residues 626–688 enclose the S1 motif domain; that stretch reads DEVLEAQVKR…NKGKIALDLA (63 aa).

The protein belongs to the polyribonucleotide nucleotidyltransferase family. Mg(2+) is required as a cofactor.

The protein localises to the cytoplasm. It catalyses the reaction RNA(n+1) + phosphate = RNA(n) + a ribonucleoside 5'-diphosphate. Functionally, involved in mRNA degradation. Catalyzes the phosphorolysis of single-stranded polyribonucleotides processively in the 3'- to 5'-direction. This Helicobacter acinonychis (strain Sheeba) protein is Polyribonucleotide nucleotidyltransferase.